A 114-amino-acid polypeptide reads, in one-letter code: Large ribosomal subunit protein bL20c (114 aa).

Belongs to the bacterial ribosomal protein bL20 family.

It is found in the plastid. The protein resides in the chloroplast. Its function is as follows. Binds directly to 23S ribosomal RNA and is necessary for the in vitro assembly process of the 50S ribosomal subunit. It is not involved in the protein synthesizing functions of that subunit. The polypeptide is Large ribosomal subunit protein bL20c (rpl20) (Guillardia theta (Cryptophyte)).